The primary structure comprises 396 residues: uncharacterized protein (396 aa).

Transmembrane regions (helical) follow at residues 7 to 27, 36 to 56, 62 to 82, 94 to 114, 159 to 179, 218 to 238, 250 to 270, 285 to 305, 310 to 330, 340 to 360, and 367 to 387; these read SDDV…SIGL, AVSG…VGVL, VYDT…LFQI, LLFI…LAFF, VVAD…IPAL, IAFN…VSGY, GTLG…IFLF, TFLI…RLIV, LILL…LAAG, ILLA…MAIA, and VAPI…VGTF.

Its subcellular location is the cell membrane. This is an uncharacterized protein from Bacillus subtilis (strain 168).